The following is a 293-amino-acid chain: Glycine--tRNA ligase alpha subunit (293 aa).

The protein belongs to the class-II aminoacyl-tRNA synthetase family. Tetramer of two alpha and two beta subunits.

Its subcellular location is the cytoplasm. It carries out the reaction tRNA(Gly) + glycine + ATP = glycyl-tRNA(Gly) + AMP + diphosphate. The chain is Glycine--tRNA ligase alpha subunit from Wolinella succinogenes (strain ATCC 29543 / DSM 1740 / CCUG 13145 / JCM 31913 / LMG 7466 / NCTC 11488 / FDC 602W) (Vibrio succinogenes).